The sequence spans 194 residues: MTRLSSGGRIEVICGCMFSGKTEELIRRLNHVRLARQRLIAFTPRRDTRYRLGSLVSHNGLSVEARVIDSIRDTPAHLNTDIHVVAVDELHLLDDPPDAAREVCQDLADRGLRVIVAGLDQDFRAQPFPAMAQLMAVAEQVDKLYAICVRCGAYATRSQRLIDGKPAPADAPTIVVGGQELYEARCRACYEPAR.

Residues 15-22 and 88-91 each bind ATP; these read GCMFSGKT and DELH. Glu89 (proton acceptor) is an active-site residue. Zn(2+)-binding residues include Cys148, Cys151, Cys186, and Cys189.

This sequence belongs to the thymidine kinase family. In terms of assembly, homotetramer.

The protein resides in the cytoplasm. It catalyses the reaction thymidine + ATP = dTMP + ADP + H(+). The chain is Thymidine kinase from Roseiflexus castenholzii (strain DSM 13941 / HLO8).